Here is an 83-residue protein sequence, read N- to C-terminus: Exodeoxyribonuclease 7 small subunit (83 aa).

It belongs to the XseB family. Heterooligomer composed of large and small subunits.

It is found in the cytoplasm. It catalyses the reaction Exonucleolytic cleavage in either 5'- to 3'- or 3'- to 5'-direction to yield nucleoside 5'-phosphates.. Bidirectionally degrades single-stranded DNA into large acid-insoluble oligonucleotides, which are then degraded further into small acid-soluble oligonucleotides. This is Exodeoxyribonuclease 7 small subunit from Aeromonas salmonicida (strain A449).